A 789-amino-acid chain; its full sequence is Disintegrin and metalloproteinase domain-containing protein 7 (789 aa).

Residues 1–25 form the signal peptide; the sequence is MFPTGIFLMSVLISQMQGRGIVGVE. A propeptide spanning residues 26-176 is cleaved from the precursor; the sequence is GQELVHPKKL…NYSCEGLNFT (151 aa). N-linked (GlcNAc...) asparagine glycosylation is found at Asn84, Asn167, and Asn174. At 177-668 the chain is on the extracellular side; it reads KKSTLIDAKI…WGEALNLTSV (492 aa). In terms of domain architecture, Peptidase M12B spans 199-393; the sequence is KFIELFVVAD…QKPACILNNP (195 aa). 4 disulfides stabilise this stretch: Cys310–Cys388, Cys350–Cys372, Cys352–Cys357, and Cys459–Cys479. Residues 401 to 487 form the Disintegrin domain; the sequence is YPFCGNKKVD…ECPKDESQAN (87 aa). N-linked (GlcNAc...) asparagine glycans are attached at residues Asn583, Asn628, and Asn664. A helical transmembrane segment spans residues 669–689; the sequence is SIMVVVLVMVIIGVGLVILLI. The Cytoplasmic segment spans residues 690–789; that stretch reads RYQKCIKMKQ…DSQSDCTRLG (100 aa). A compositionally biased stretch (basic and acidic residues) spans 762–771; sequence DPRGIADPKQ. The disordered stretch occupies residues 762 to 789; that stretch reads DPRGIADPKQNDNMNLNLDSQSDCTRLG. Polar residues predominate over residues 772-789; sequence NDNMNLNLDSQSDCTRLG.

As to quaternary structure, interacts with ITM2B in sperm; the interaction increases following capacitation. Interacts with HSPA5 and CANX. Expressed specifically in the caput region of the epididymis (at protein level).

The protein resides in the membrane. Required for normal male fertility via maintenance of epithelial cell morphology in the caput epididymis and subsequently correct epididymis lumen structure required for sperm development. Plays a role in sperm motility, flagella morphology and tyrosine phosphorylation during sperm capacitance. Plays a role in normal expression levels of HSPA5, ITM2B and ADAM2 in sperm both prior to and post-capacitation. This is a non catalytic metalloprotease-like protein. This chain is Disintegrin and metalloproteinase domain-containing protein 7, found in Rattus norvegicus (Rat).